Consider the following 316-residue polypeptide: tRNA-cytidine(32) 2-sulfurtransferase (316 aa).

Residues 1 to 31 form a disordered region; that stretch reads MGAVIDDSMPGPGADATGTGPSDARTERETR. A compositionally biased stretch (low complexity) spans 10–21; that stretch reads PGPGADATGTGP. The PP-loop motif motif lies at 62-67; that stretch reads SGGKDS. [4Fe-4S] cluster contacts are provided by cysteine 137, cysteine 140, and cysteine 228.

The protein belongs to the TtcA family. As to quaternary structure, homodimer. It depends on Mg(2+) as a cofactor. The cofactor is [4Fe-4S] cluster.

It is found in the cytoplasm. It catalyses the reaction cytidine(32) in tRNA + S-sulfanyl-L-cysteinyl-[cysteine desulfurase] + AH2 + ATP = 2-thiocytidine(32) in tRNA + L-cysteinyl-[cysteine desulfurase] + A + AMP + diphosphate + H(+). Its pathway is tRNA modification. Its function is as follows. Catalyzes the ATP-dependent 2-thiolation of cytidine in position 32 of tRNA, to form 2-thiocytidine (s(2)C32). The sulfur atoms are provided by the cysteine/cysteine desulfurase (IscS) system. This is tRNA-cytidine(32) 2-sulfurtransferase from Verminephrobacter eiseniae (strain EF01-2).